We begin with the raw amino-acid sequence, 108 residues long: Protein SMALL AUXIN UP-REGULATED RNA 51 (108 aa).

It belongs to the ARG7 family. In terms of tissue distribution, expressed in organ primordia. Hardly observed in leaves.

The protein localises to the cell membrane. In terms of biological role, provide a mechanistic link between auxin and plasma membrane H(+)-ATPases (PM H(+)-ATPases, e.g. AHA1 and AHA2), and triggers PM H(+)-ATPases activity by promoting phosphorylation of their C-terminal autoinhibitory domain as a result of PP2C-D subfamily of type 2C phosphatases inhibition, thus leading to the acidification of the apoplast and the facilitation of solutes and water uptake to drive cell expansion. Triggers plant growth probably by promoting cell elongation. Regulates branch angles and bending. The protein is Protein SMALL AUXIN UP-REGULATED RNA 51 of Arabidopsis thaliana (Mouse-ear cress).